The primary structure comprises 338 residues: RNA 3'-terminal phosphate cyclase (338 aa).

ATP-binding positions include Gln103 and 283–287; that span reads YLADQ. His308 serves as the catalytic Tele-AMP-histidine intermediate.

The protein belongs to the RNA 3'-terminal cyclase family. Type 1 subfamily.

The protein localises to the cytoplasm. The enzyme catalyses a 3'-end 3'-phospho-ribonucleotide-RNA + ATP = a 3'-end 2',3'-cyclophospho-ribonucleotide-RNA + AMP + diphosphate. Functionally, catalyzes the conversion of 3'-phosphate to a 2',3'-cyclic phosphodiester at the end of RNA. The mechanism of action of the enzyme occurs in 3 steps: (A) adenylation of the enzyme by ATP; (B) transfer of adenylate to an RNA-N3'P to produce RNA-N3'PP5'A; (C) and attack of the adjacent 2'-hydroxyl on the 3'-phosphorus in the diester linkage to produce the cyclic end product. The biological role of this enzyme is unknown but it is likely to function in some aspects of cellular RNA processing. The chain is RNA 3'-terminal phosphate cyclase from Shigella boydii serotype 18 (strain CDC 3083-94 / BS512).